Reading from the N-terminus, the 367-residue chain is Alginate lyase (367 aa).

The signal sequence occupies residues 1 to 24; that stretch reads MTIINRKTAPALLALALFGGAAQA. Residues 63-64, 136-137, and Tyr254 each bind substrate; these read SK and HT.

The protein belongs to the polysaccharide lyase 5 family.

The protein resides in the periplasm. The enzyme catalyses Eliminative cleavage of alginate to give oligosaccharides with 4-deoxy-alpha-L-erythro-hex-4-enuronosyl groups at their non-reducing ends and beta-D-mannuronate at their reducing end.. Functionally, catalyzes the depolymerization of alginate by cleaving the beta-1,4 glycosidic bond between two adjacent sugar residues via a beta-elimination mechanism. May serve to degrade mislocalized alginate that is trapped in the periplasmic space. The chain is Alginate lyase from Pseudomonas entomophila (strain L48).